Reading from the N-terminus, the 231-residue chain is Caspase-like protein (231 aa).

This sequence belongs to the peptidase C14A family.

This Trichoplusia ni ascovirus 2c (TnAV-2c) protein is Caspase-like protein.